We begin with the raw amino-acid sequence, 346 residues long: tRNA N6-adenosine threonylcarbamoyltransferase (346 aa).

Fe cation contacts are provided by histidine 111 and histidine 115. Substrate is bound by residues 134 to 138, aspartate 167, glycine 180, and asparagine 279; that span reads LVSGG. Aspartate 307 lines the Fe cation pocket.

This sequence belongs to the KAE1 / TsaD family. The cofactor is Fe(2+).

It localises to the cytoplasm. It catalyses the reaction L-threonylcarbamoyladenylate + adenosine(37) in tRNA = N(6)-L-threonylcarbamoyladenosine(37) in tRNA + AMP + H(+). Functionally, required for the formation of a threonylcarbamoyl group on adenosine at position 37 (t(6)A37) in tRNAs that read codons beginning with adenine. Is involved in the transfer of the threonylcarbamoyl moiety of threonylcarbamoyl-AMP (TC-AMP) to the N6 group of A37, together with TsaE and TsaB. TsaD likely plays a direct catalytic role in this reaction. This chain is tRNA N6-adenosine threonylcarbamoyltransferase, found in Burkholderia pseudomallei (strain K96243).